The chain runs to 71 residues: SPbeta prophage-derived uncharacterized protein YopF (71 aa).

The protein is SPbeta prophage-derived uncharacterized protein YopF (yopF) of Bacillus subtilis (strain 168).